A 372-amino-acid chain; its full sequence is L-selectin (372 aa).

The N-terminal stretch at 1–28 (MIFPWKCQSTQRDLWNIFKLWGWTMLCC) is a signal peptide. The propeptide occupies 29–38 (DFLAHHGTDC). Topologically, residues 39–332 (WTYHYSEKPM…FSMIKEGDYN (294 aa)) are extracellular. The 101-residue stretch at 55-155 (RFCRDNYTDL…ACHKLKAALC (101 aa)) folds into the C-type lectin domain. 9 cysteine pairs are disulfide-bonded: C57/C155, C128/C147, C160/C171, C165/C180, C182/C191, C197/C241, C227/C254, C259/C303, and C289/C316. Residues N60 and N104 are each glycosylated (N-linked (GlcNAc...) asparagine). Ca(2+) contacts are provided by E118, N120, E126, N143, and D144. The EGF-like domain maps to 156 to 192 (YTASCQPWSCSGHGECVEIINNYTCNCDVGYYGPQCQ). N177 is a glycosylation site (N-linked (GlcNAc...) asparagine). Sushi domains follow at residues 195–256 (IQCE…TCQV) and 257–318 (IQCE…ICQK). N-linked (GlcNAc...) asparagine glycans are attached at residues N232, N246, and N271. A helical membrane pass occupies residues 333–355 (PLFIPVAVMVTAFSGLAFIIWLA). At 356 to 372 (RRLKKGKKSKRSMNDPY) the chain is on the cytoplasmic side.

The protein belongs to the selectin/LECAM family. Interaction with SELPLG/PSGL1 and PODXL2 is required for promoting recruitment and rolling of leukocytes. This interaction is dependent on the sialyl Lewis X glycan modification of SELPLG and PODXL2, and tyrosine sulfation modifications of SELPLG. Sulfation on 'Tyr-51' of SELPLG is important for L-selectin binding. In terms of processing, N-glycosylated. As to expression, expressed in B-cell lines and T-lymphocytes.

It is found in the cell membrane. Calcium-dependent lectin that mediates cell adhesion by binding to glycoproteins on neighboring cells. Mediates the adherence of lymphocytes to endothelial cells of high endothelial venules in peripheral lymph nodes. Promotes initial tethering and rolling of leukocytes in endothelia. This Homo sapiens (Human) protein is L-selectin (SELL).